The chain runs to 683 residues: Protein zntD (683 aa).

Transmembrane regions (helical) follow at residues I12–M32, L42–F62, and P79–I99. The segment covering V120–H129 has biased composition (basic residues). 4 disordered regions span residues V120–T180, G299–N325, C364–T390, and I451–N489. Residues G137–S149 are compositionally biased toward gly residues. Composition is skewed to low complexity over residues T160–T180 and N302–N325. The segment covering I451–N465 has biased composition (low complexity). Residues N466–N475 are compositionally biased toward gly residues. The segment covering S476–N489 has biased composition (low complexity). The next 5 helical transmembrane spans lie at I534 to A554, V564 to I584, F600 to I620, P631 to I651, and I662 to W682.

It belongs to the ZIP transporter (TC 2.A.5) family.

It localises to the membrane. Its function is as follows. May transport divalent cations. May participate, with dstA, in the regulation of the differentiation of stalk cells during development. The polypeptide is Protein zntD (zntD) (Dictyostelium discoideum (Social amoeba)).